A 428-amino-acid chain; its full sequence is Cholecystokinin receptor type A (428 aa).

Over 1–41 (MEVADSLLGNGSDVPPPCELGLENETLVCLEQPRAAKEWQP) the chain is Extracellular. N10 and N24 each carry an N-linked (GlcNAc...) asparagine glycan. Residues C18 and C29 are joined by a disulfide bond. A helical membrane pass occupies residues 42 to 67 (AVQILLYSLIFLLSVLGNTLVITVLI). Residues 68–77 (RNKRMRTVTN) are Cytoplasmic-facing. Residues 78 to 104 (IFLLSLAVSDLMLCLFCMPFNLIPNLL) traverse the membrane as a helical segment. At 105-115 (KDFIFGSAVCK) the chain is on the extracellular side. C114 and C196 are joined by a disulfide. A helical transmembrane segment spans residues 116-137 (TTTYFMGTSVSVSTFNLVAISL). Residues 138–157 (ERYGAICKPLQSRVWQTKSH) lie on the Cytoplasmic side of the membrane. A helical transmembrane segment spans residues 158–178 (ALKVIATTWCLSFTIMTPYPI). Over 179-210 (YSNLVPFTKTNNQTANMCRFLLPNDVMQQSWH) the chain is Extracellular. N190 carries N-linked (GlcNAc...) asparagine glycosylation. Residues 211 to 234 (TFLLLILFLIPGIVMMVAYGLISL) traverse the membrane as a helical segment. Residues 235-313 (ELYQGIKFDA…NLMAKKRVIR (79 aa)) lie on the Cytoplasmic side of the membrane. The segment at 250–269 (ARDRNPSTGSSGRYEDGDGC) is disordered. The helical transmembrane segment at 314-334 (MLMVIVVLFFLCWMPIFSANA) threads the bilayer. At 335-349 (WRAYDTASAERRLSG) the chain is on the extracellular side. The helical transmembrane segment at 350–373 (TPISFILLLSYTSSCVNPIIYCFM) threads the bilayer. Over 374-428 (NKRFRLGFLATFPCCPHPGPPGPRGEVGEEEEGRTTGASLSRYSYSHMSASAPGP) the chain is Cytoplasmic. C387 carries S-palmitoyl cysteine lipidation. The segment at 393-428 (PPGPRGEVGEEEEGRTTGASLSRYSYSHMSASAPGP) is disordered. Polar residues predominate over residues 409–422 (TGASLSRYSYSHMS).

The protein belongs to the G-protein coupled receptor 1 family.

The protein resides in the cell membrane. Functionally, receptor for cholecystokinin. Mediates pancreatic growth and enzyme secretion, smooth muscle contraction of the gall bladder and stomach. Has a 1000-fold higher affinity for CCK rather than for gastrin. It modulates feeding and dopamine-induced behavior in the central and peripheral nervous system. This receptor mediates its action by association with G proteins that activate a phosphatidylinositol-calcium second messenger system. This Canis lupus familiaris (Dog) protein is Cholecystokinin receptor type A (CCKAR).